The primary structure comprises 132 residues: Precursor of CEP10 (132 aa).

The N-terminal stretch at 1-19 (MKLFIIIVVTSLTISKVFD) is a signal peptide. Residues 20–66 (KTLVTIEARNLRKMDRHEHFNANEDFVEAKMLKKIDNKNNLNNRCIN) constitute a propeptide that is removed on maturation. Hydroxyproline is present on residues Pro-70 and Pro-73. Positions 82–91 (PKVINNKFTK) are excised as a propeptide. Residues Pro-95, Pro-98, and Pro-102 each carry the hydroxyproline modification. Residues 107–116 (LRVVNNKFTN) constitute a propeptide that is removed on maturation. Hydroxyproline occurs at positions 120, 123, and 127. Pro-132 is a propeptide.

Belongs to the C-terminally encoded plant signaling peptide (CEP) family. As to quaternary structure, interacts with CEP receptors (e.g. CEPR1 and CEPR2). In terms of processing, the mature small signaling peptide is generated by proteolytic processing of the longer precursor.

It localises to the secreted. Its subcellular location is the extracellular space. It is found in the apoplast. Its function is as follows. Extracellular signaling peptide that may regulate primary root growth rate and systemic nitrogen (N)-demand signaling. The protein is Precursor of CEP10 of Arabidopsis thaliana (Mouse-ear cress).